The following is a 416-amino-acid chain: Sarcosine oxidase subunit beta (416 aa).

FAD contacts are provided by glycine 41, histidine 42, glutamate 63, asparagine 71, threonine 76, and isoleucine 78. Histidine 182 carries the tele-8alpha-FMN histidine modification. Valine 206, glycine 366, and lysine 368 together coordinate FAD.

It belongs to the SoxB family. In terms of assembly, heterotetramer composed of subunits alpha (SoxA), beta (SoxB), gamma (SoxG) and delta (SoxD). The cofactor is FAD. Requires FMN as cofactor.

Its subcellular location is the cytoplasm. The catalysed reaction is sarcosine + (6S)-5,6,7,8-tetrahydrofolate + O2 = (6R)-5,10-methylene-5,6,7,8-tetrahydrofolate + glycine + H2O2. It carries out the reaction sarcosine + O2 + H2O = formaldehyde + glycine + H2O2. In terms of biological role, in the presence of tetrahydrofolate, catalyzes the oxidative demethylation of sarcosine to yield glycine, 5,10-methylenetetrahydrofolate and hydrogen peroxide. In the absence of tetrahydrofolate, catalyzes the oxidative demethylation of sarcosine to yield glycine, formaldehyde and hydrogen peroxide. This chain is Sarcosine oxidase subunit beta (soxB), found in Rhizobium meliloti (strain 1021) (Ensifer meliloti).